The following is a 315-amino-acid chain: Aspartate carbamoyltransferase catalytic subunit (315 aa).

Residues R65 and T66 each coordinate carbamoyl phosphate. Residue K93 coordinates L-aspartate. Residues R115, H145, and Q148 each contribute to the carbamoyl phosphate site. 2 residues coordinate L-aspartate: R179 and R234. G275 and P276 together coordinate carbamoyl phosphate.

This sequence belongs to the aspartate/ornithine carbamoyltransferase superfamily. ATCase family. In terms of assembly, heterododecamer (2C3:3R2) of six catalytic PyrB chains organized as two trimers (C3), and six regulatory PyrI chains organized as three dimers (R2).

It catalyses the reaction carbamoyl phosphate + L-aspartate = N-carbamoyl-L-aspartate + phosphate + H(+). The protein operates within pyrimidine metabolism; UMP biosynthesis via de novo pathway; (S)-dihydroorotate from bicarbonate: step 2/3. Catalyzes the condensation of carbamoyl phosphate and aspartate to form carbamoyl aspartate and inorganic phosphate, the committed step in the de novo pyrimidine nucleotide biosynthesis pathway. This is Aspartate carbamoyltransferase catalytic subunit from Xanthomonas euvesicatoria pv. vesicatoria (strain 85-10) (Xanthomonas campestris pv. vesicatoria).